Reading from the N-terminus, the 255-residue chain is Indole-3-glycerol phosphate synthase (255 aa).

The protein belongs to the TrpC family.

It carries out the reaction 1-(2-carboxyphenylamino)-1-deoxy-D-ribulose 5-phosphate + H(+) = (1S,2R)-1-C-(indol-3-yl)glycerol 3-phosphate + CO2 + H2O. Its pathway is amino-acid biosynthesis; L-tryptophan biosynthesis; L-tryptophan from chorismate: step 4/5. This Streptococcus pneumoniae (strain Taiwan19F-14) protein is Indole-3-glycerol phosphate synthase.